The primary structure comprises 82 residues: Sulfur carrier protein TusA (82 aa).

C19 acts as the Cysteine persulfide intermediate in catalysis.

The protein belongs to the sulfur carrier protein TusA family. As to quaternary structure, interacts with IscS.

It localises to the cytoplasm. The protein operates within tRNA modification. In terms of biological role, sulfur carrier protein involved in sulfur trafficking in the cell. Part of a sulfur-relay system required for 2-thiolation during synthesis of 2-thiouridine of the modified wobble base 5-methylaminomethyl-2-thiouridine (mnm(5)s(2)U) in tRNA. Interacts with IscS and stimulates its cysteine desulfurase activity. Accepts an activated sulfur from IscS, which is then transferred to TusD, and thus determines the direction of sulfur flow from IscS to 2-thiouridine formation. Also appears to be involved in sulfur transfer for the biosynthesis of molybdopterin. In Edwardsiella ictaluri (strain 93-146), this protein is Sulfur carrier protein TusA.